A 233-amino-acid chain; its full sequence is Glutathione S-transferase 2 (233 aa).

The GST N-terminal domain occupies 17 to 101 (QKMIIYDTPA…YIDALDGTPT (85 aa)). Glutathione contacts are provided by residues Tyr-29, His-58, Val-72, 85–86 (EC), and His-133. The GST C-terminal domain maps to 106-233 (TPLEKGVIHM…KLLEIRSKSS (128 aa)).

The protein belongs to the GST superfamily. Homodimer.

The catalysed reaction is RX + glutathione = an S-substituted glutathione + a halide anion + H(+). In Saccharomyces cerevisiae (strain ATCC 204508 / S288c) (Baker's yeast), this protein is Glutathione S-transferase 2 (GTT2).